We begin with the raw amino-acid sequence, 135 residues long: Putative hydrolase EbsB (135 aa).

Residues 1–128 form the RNase H type-1 domain; sequence MLRIYVDAAT…ADMLARQALQ (128 aa). Asp7, Glu45, Asp71, and Asp120 together coordinate Mg(2+).

Belongs to the RNase H family. EbsB subfamily. The cofactor is Mg(2+).

It localises to the secreted. The protein localises to the cell wall. Seems to play some role in the cell surface expression of a chromosomally encoded receptor, named enterococcal binding substance (EBS), that mediates mating aggregate formation. Might interfere with the synthesis or assembly of EBS and function as a cell wall hydrolase. The chain is Putative hydrolase EbsB from Enterococcus faecalis (strain ATCC 700802 / V583).